The primary structure comprises 500 residues: Chromosomal replication initiator protein DnaA (500 aa).

Residues 1-37 (MSDTPFGDADHPRPAPIHPDAVLPPPMSSQSADNDPT) are disordered. A domain I, interacts with DnaA modulators region spans residues 1 to 103 (MSDTPFGDAD…EELLSDHFHK (103 aa)). Positions 14-27 (PAPIHPDAVLPPPM) are enriched in pro residues. The tract at residues 103-161 (KAIHLAITIDPDLELALGAPDHEDEEEEVPPAQFVPKVTVGVTEPSARPTTTIDDDEGN) is domain II. Positions 162 to 378 (RLNPKYTFDS…GALIRVTAFA (217 aa)) are domain III, AAA+ region. Residues Gly-206, Gly-208, Lys-209, and Thr-210 each coordinate ATP. The interval 379-500 (SLNQQPVDIS…SEITNRIKQY (122 aa)) is domain IV, binds dsDNA.

Belongs to the DnaA family. Oligomerizes as a right-handed, spiral filament on DNA at oriC.

It is found in the cytoplasm. In terms of biological role, plays an essential role in the initiation and regulation of chromosomal replication. ATP-DnaA binds to the origin of replication (oriC) to initiate formation of the DNA replication initiation complex once per cell cycle. Binds the DnaA box (a 9 base pair repeat at the origin) and separates the double-stranded (ds)DNA. Forms a right-handed helical filament on oriC DNA; dsDNA binds to the exterior of the filament while single-stranded (ss)DNA is stabiized in the filament's interior. The ATP-DnaA-oriC complex binds and stabilizes one strand of the AT-rich DNA unwinding element (DUE), permitting loading of DNA polymerase. After initiation quickly degrades to an ADP-DnaA complex that is not apt for DNA replication. Binds acidic phospholipids. The chain is Chromosomal replication initiator protein DnaA from Cutibacterium acnes (strain DSM 16379 / KPA171202) (Propionibacterium acnes).